The primary structure comprises 503 residues: REST corepressor 2 (503 aa).

Positions 1-62 (MPSVMEKSHG…IPECKPDNTS (62 aa)) are disordered. One can recognise an ELM2 domain in the interval 41 to 126 (SMIRVGSDYQ…RSLADLANFT (86 aa)). Residues 127 to 178 (PFPEEWSVEDKVLFEQAFSFHGKSFQRIQQMLPEKLIPSLVKYYYSWKKTRS) form the SANT 1 domain. 2 coiled-coil regions span residues 182–206 (VMDR…DQIK) and 286–314 (QLET…SLEG). The region spanning 327 to 378 (KLNARWTTDEQLLAVQAVRKYGKDFQAISEVLGNKTPSQVKTFFISYRRRFN) is the SANT 2 domain. Positions 385–503 (EWEAEQEPSP…VGSHAESTFS (119 aa)) are disordered. Residues 399–412 (TDMSNKTSGSSQTP) show a composition bias toward polar residues. A compositionally biased stretch (low complexity) spans 423-442 (SVSSSSQPAPPAAAAAASLS).

The protein belongs to the CoREST family.

Its subcellular location is the nucleus. May act as a component of a corepressor complex that represses transcription. The protein is REST corepressor 2 (rcor2) of Xenopus laevis (African clawed frog).